Consider the following 401-residue polypeptide: NADH-quinone oxidoreductase subunit D 2 (401 aa).

It belongs to the complex I 49 kDa subunit family. In terms of assembly, NDH-1 is composed of 14 different subunits. Subunits NuoB, C, D, E, F, and G constitute the peripheral sector of the complex.

The protein resides in the cell inner membrane. The enzyme catalyses a quinone + NADH + 5 H(+)(in) = a quinol + NAD(+) + 4 H(+)(out). NDH-1 shuttles electrons from NADH, via FMN and iron-sulfur (Fe-S) centers, to quinones in the respiratory chain. The immediate electron acceptor for the enzyme in this species is believed to be ubiquinone. Couples the redox reaction to proton translocation (for every two electrons transferred, four hydrogen ions are translocated across the cytoplasmic membrane), and thus conserves the redox energy in a proton gradient. In Thermodesulfovibrio yellowstonii (strain ATCC 51303 / DSM 11347 / YP87), this protein is NADH-quinone oxidoreductase subunit D 2.